The primary structure comprises 154 residues: Transcriptional repressor NrdR (154 aa).

A zinc finger spans residues 3 to 34 (CPFCRHPDSRVVDSRETDEGQAIRRRRSCPEC). The ATP-cone domain maps to 46–136 (LAVVKRSGVT…VYRSFESAAD (91 aa)).

This sequence belongs to the NrdR family. The cofactor is Zn(2+).

In terms of biological role, negatively regulates transcription of bacterial ribonucleotide reductase nrd genes and operons by binding to NrdR-boxes. This Mycobacterium sp. (strain JLS) protein is Transcriptional repressor NrdR.